The following is a 1232-amino-acid chain: Nitrate reductase alpha subunit (1232 aa).

A 4Fe-4S Mo/W bis-MGD-type domain is found at 53–117 (DKVVRSTHGV…SFSWYSYSPT (65 aa)). [4Fe-4S] cluster-binding residues include His60, Cys64, Cys68, and Cys103. Asp233 contacts Mo-bis(molybdopterin guanine dinucleotide).

This sequence belongs to the prokaryotic molybdopterin-containing oxidoreductase family. It depends on [4Fe-4S] cluster as a cofactor. Mo-bis(molybdopterin guanine dinucleotide) is required as a cofactor.

It is found in the cell membrane. It carries out the reaction nitrate + a quinol = a quinone + nitrite + H2O. In terms of biological role, the alpha chain is the actual site of nitrate reduction. The chain is Nitrate reductase alpha subunit (narG) from Mycobacterium tuberculosis (strain CDC 1551 / Oshkosh).